A 321-amino-acid chain; its full sequence is L-carnitine dehydrogenase (321 aa).

Glycine 14 to glycine 19 contributes to the NAD(+) binding site.

It belongs to the 3-hydroxyacyl-CoA dehydrogenase family. L-carnitine dehydrogenase subfamily. As to quaternary structure, homodimer.

It localises to the cytoplasm. It catalyses the reaction carnitine + NAD(+) = 3-dehydrocarnitine + NADH + H(+). It functions in the pathway amine and polyamine metabolism; carnitine metabolism. Catalyzes the NAD(+)-dependent oxidation of L-carnitine to 3-dehydrocarnitine. The chain is L-carnitine dehydrogenase from Burkholderia mallei (strain ATCC 23344).